Reading from the N-terminus, the 1390-residue chain is Hepatocyte growth factor receptor (1390 aa).

An N-terminal signal peptide occupies residues 1-24; the sequence is MKAPAVLAPGILVLLFTLVQRSNG. The Extracellular portion of the chain corresponds to 25 to 932; that stretch reads ECKEALAKSE…VIVQPDQNFT (908 aa). A Sema domain is found at 27 to 515; that stretch reads KEALAKSEMN…TGKKITKIPL (489 aa). The N-linked (GlcNAc...) asparagine glycan is linked to asparagine 45. 4 cysteine pairs are disulfide-bonded: cysteine 95–cysteine 101, cysteine 98–cysteine 160, cysteine 133–cysteine 141, and cysteine 172–cysteine 175. The N-linked (GlcNAc...) asparagine glycan is linked to asparagine 106. Asparagine 149 is a glycosylation site (N-linked (GlcNAc...) asparagine). Asparagine 202 is a glycosylation site (N-linked (GlcNAc...) asparagine). 2 disulfides stabilise this stretch: cysteine 298–cysteine 363 and cysteine 385–cysteine 397. Asparagine 399 and asparagine 405 each carry an N-linked (GlcNAc...) asparagine glycan. Cystine bridges form between cysteine 520/cysteine 538, cysteine 526/cysteine 561, cysteine 529/cysteine 545, and cysteine 541/cysteine 551. IPT/TIG domains follow at residues 563–655, 657–739, and 742–836; these read PAIY…FSYV, PVIT…FSYR, and PIVY…LIYV. Residue threonine 582 is glycosylated (O-linked (Man) threonine). Residues asparagine 607 and asparagine 635 are each glycosylated (N-linked (GlcNAc...) asparagine). Residues threonine 676 and threonine 761 are each glycosylated (O-linked (Man) threonine). Residues asparagine 785, asparagine 879, and asparagine 930 are each glycosylated (N-linked (GlcNAc...) asparagine). Residues 933 to 955 traverse the membrane as a helical segment; the sequence is GLIAGVVSISIALLLLLGFFLWL. The Cytoplasmic portion of the chain corresponds to 956 to 1390; the sequence is KKRKQIKDLG…TRPASFWETS (435 aa). Serine 966 is modified (phosphoserine). Position 977 is a phosphothreonine (threonine 977). Serine 990, serine 997, and serine 1000 each carry phosphoserine. Tyrosine 1003 is subject to Phosphotyrosine. One can recognise a Protein kinase domain in the interval 1078 to 1345; that stretch reads VHFNEVIGRG…RISAIFSTFI (268 aa). Residues 1084-1092 and lysine 1110 each bind ATP; that span reads IGRGHFGCV. The active-site Proton acceptor is aspartate 1204. The tract at residues 1212 to 1390 is interaction with RANBP9; the sequence is LDEKFTVKVA…TRPASFWETS (179 aa). Tyrosine 1230 carries the phosphotyrosine modification. Tyrosine 1234 and tyrosine 1235 each carry phosphotyrosine; by autocatalysis. Threonine 1289 is modified (phosphothreonine). Residues 1320-1359 are interaction with MUC20; it reads WHPKAEMRPSFSELVSRISAIFSTFIGEHYVHVNATYVNV. A phosphotyrosine; by autocatalysis mark is found at tyrosine 1349 and tyrosine 1356. At tyrosine 1365 the chain carries Phosphotyrosine.

Belongs to the protein kinase superfamily. Tyr protein kinase family. As to quaternary structure, heterodimer made of an alpha chain (50 kDa) and a beta chain (145 kDa) which are disulfide linked. Binds PLXNB1. Interacts when phosphorylated with downstream effectors including STAT3, PIK3R1, SRC, PCLG1, GRB2 and GAB1. Interacts with SPSB1, SPSB2 and SPSB4. Interacts with INPP5D/SHIP1. When phosphorylated at Tyr-1356, interacts with INPPL1/SHIP2. Interacts with RANBP9 and RANBP10, as well as SPSB1, SPSB2, SPSB3 and SPSB4. SPSB1 binding occurs in the presence and in the absence of HGF, however HGF treatment has a positive effect on this interaction. Interacts with MUC20; prevents interaction with GRB2 and suppresses hepatocyte growth factor-induced cell proliferation. Interacts with GRB10. Interacts with PTPN1 and PTPN2. Interacts with HSP90AA1 and HSP90AB1; the interaction suppresses MET kinase activity. Interacts with tensin TNS3. Interacts (when phosphorylated) with tensin TNS4 (via SH2 domain); the interaction increases MET protein stability by inhibiting MET endocytosis and subsequent lysosomal degradation. Post-translationally, autophosphorylated in response to ligand binding on Tyr-1234 and Tyr-1235 in the kinase domain leading to further phosphorylation of Tyr-1349 and Tyr-1356 in the C-terminal multifunctional docking site. Dephosphorylated by PTPRJ at Tyr-1349 and Tyr-1365. Dephosphorylated by PTPN1 and PTPN2. In terms of processing, ubiquitinated. Ubiquitination by CBL regulates the receptor stability and activity through proteasomal degradation. O-mannosylation of IPT/TIG domains by TMEM260 is required for protein maturation. O-mannosylated residues are composed of single mannose glycans that are not elongated or modified.

Its subcellular location is the membrane. The enzyme catalyses L-tyrosyl-[protein] + ATP = O-phospho-L-tyrosyl-[protein] + ADP + H(+). Its activity is regulated as follows. In its inactive state, the C-terminal tail interacts with the catalytic domain and inhibits the kinase activity. Upon ligand binding, the C-terminal tail is displaced and becomes phosphorylated, thus increasing the kinase activity. Receptor tyrosine kinase that transduces signals from the extracellular matrix into the cytoplasm by binding to hepatocyte growth factor/HGF ligand. Regulates many physiological processes including proliferation, scattering, morphogenesis and survival. Ligand binding at the cell surface induces autophosphorylation of MET on its intracellular domain that provides docking sites for downstream signaling molecules. Following activation by ligand, interacts with the PI3-kinase subunit PIK3R1, PLCG1, SRC, GRB2, STAT3 or the adapter GAB1. Recruitment of these downstream effectors by MET leads to the activation of several signaling cascades including the RAS-ERK, PI3 kinase-AKT, or PLCgamma-PKC. The RAS-ERK activation is associated with the morphogenetic effects while PI3K/AKT coordinates prosurvival effects. During embryonic development, MET signaling plays a role in gastrulation, development and migration of muscles and neuronal precursors, angiogenesis and kidney formation. In adults, participates in wound healing as well as organ regeneration and tissue remodeling. Also promotes differentiation and proliferation of hematopoietic cells. This is Hepatocyte growth factor receptor (MET) from Pongo abelii (Sumatran orangutan).